A 231-amino-acid chain; its full sequence is tRNA (guanine-N(7)-)-methyltransferase (231 aa).

S-adenosyl-L-methionine is bound by residues Glu62, Glu87, Asp114, and Asp137. Asp137 is a catalytic residue. Residues Lys141, Asp173, and 210-213 (TKFE) contribute to the substrate site.

The protein belongs to the class I-like SAM-binding methyltransferase superfamily. TrmB family.

The catalysed reaction is guanosine(46) in tRNA + S-adenosyl-L-methionine = N(7)-methylguanosine(46) in tRNA + S-adenosyl-L-homocysteine. It functions in the pathway tRNA modification; N(7)-methylguanine-tRNA biosynthesis. In terms of biological role, catalyzes the formation of N(7)-methylguanine at position 46 (m7G46) in tRNA. This chain is tRNA (guanine-N(7)-)-methyltransferase, found in Methylococcus capsulatus (strain ATCC 33009 / NCIMB 11132 / Bath).